We begin with the raw amino-acid sequence, 503 residues long: ATP synthase subunit alpha, chloroplastic (503 aa).

An ATP-binding site is contributed by 170 to 177 (GDRQTGKT).

It belongs to the ATPase alpha/beta chains family. F-type ATPases have 2 components, CF(1) - the catalytic core - and CF(0) - the membrane proton channel. CF(1) has five subunits: alpha(3), beta(3), gamma(1), delta(1), epsilon(1). CF(0) has four main subunits: a, b, b' and c.

The protein localises to the plastid. The protein resides in the chloroplast thylakoid membrane. The catalysed reaction is ATP + H2O + 4 H(+)(in) = ADP + phosphate + 5 H(+)(out). In terms of biological role, produces ATP from ADP in the presence of a proton gradient across the membrane. The alpha chain is a regulatory subunit. In Trieres chinensis (Marine centric diatom), this protein is ATP synthase subunit alpha, chloroplastic.